The following is a 283-amino-acid chain: Trafficking protein particle complex subunit 31 (283 aa).

Over residues 1–16 (MSQRIIQPSASDQQFP) the composition is skewed to polar residues. Disordered regions lie at residues 1 to 20 (MSQRIIQPSASDQQFPGKSD) and 126 to 156 (SSKLSNASNSPGMLANSSTATSASANERLQE). Over residues 126–151 (SSKLSNASNSPGMLANSSTATSASAN) the composition is skewed to low complexity.

This sequence belongs to the TRAPP small subunits family. BET3 subfamily. Part of the multisubunit TRAPP (transport protein particle) I complex composed of BET3, BET5, TRS20, TRS23, TRS31 and TRS33. Part of the multisubunit TRAPP (transport protein particle) II complex composed of BET3, BET5, TRS20, TRS23, TRS31, TRS33, TRS65, TRS85, TRS120 and TRS130. Part of the multisubunit TRAPP (transport protein particle) III complex composed of BET3, BET5, TRS20, TRS23, TRS31, TRS33 and TRS85.

Its subcellular location is the golgi apparatus. The protein localises to the cis-Golgi network. The protein resides in the endoplasmic reticulum. It is found in the preautophagosomal structure. In terms of biological role, component of the TRAPP I, TRAPP II and TRAPP III complexes which act as guanine nucleotide exchange factors (GEF) for YPT1. TRAPP I plays a key role in the late stages of endoplasmic reticulum to Golgi traffic. TRAPP II plays a role in intra-Golgi transport. TRAPP III plays a role in autophagosome formation. The chain is Trafficking protein particle complex subunit 31 (TRS31) from Saccharomyces cerevisiae (strain ATCC 204508 / S288c) (Baker's yeast).